Here is a 586-residue protein sequence, read N- to C-terminus: Proton channel OTOP1 (586 aa).

The Cytoplasmic segment spans residues 1–52 (MVEHGGTDSMWLNKYNPAAASSASSSSSSDAENKLFSRLKVSLTKKYPQKNA). A helical transmembrane segment spans residues 53–74 (ELLSAQYGTNLLLLGVSVMLAL). Topologically, residues 75–82 (AAQSGPVK) are extracellular. The helical transmembrane segment at 83–106 (EEHLLSFITVLMLVQLVWMLCYMI) threads the bilayer. At 107–124 (RRERERSPVPERDAHAGA) the chain is on the cytoplasmic side. The chain crosses the membrane as a helical span at residues 125-147 (SWIRGGLTMLALLSLIMDAFRIG). Over 148 to 157 (YFVGYHSCIS) the chain is Extracellular. A helical membrane pass occupies residues 158–182 (AALGVYPIVHALHTISQVHFLWFHI). At 183-190 (KDVIKKYE) the chain is on the cytoplasmic side. The helical transmembrane segment at 191–217 (TFERFGVIHAVFTNLLLWCNGVMSETE) threads the bilayer. Residues 218-255 (HFMHNHRRRLIEMGYANLSTVDVQPHCNCTTSVCSMFS) lie on the Extracellular side of the membrane. The helical transmembrane segment at 256 to 281 (TSLYYLYPFNIEYHIFVSAMLFVMWK) threads the bilayer. Topologically, residues 282–303 (NIGRTLDRHSNRKRRSTGSTGL) are cytoplasmic. The helical transmembrane segment at 304–326 (LLGPLGGLVALASSVSVLVVYLI) threads the bilayer. At 327 to 336 (HLEKTEEMHE) the chain is on the extracellular side. Residues 337 to 362 (AAVSMFYYYGVAMMACMCVGSGTGLL) traverse the membrane as a helical segment. At 363 to 380 (VYRMENRPMDTGSNPART) the chain is on the cytoplasmic side. The chain crosses the membrane as a helical span at residues 381–405 (LDTELLLASSLGSWLMSWCSVVASV). Over 406-417 (AEAGQKSPSFSW) the chain is Extracellular. A helical transmembrane segment spans residues 418–438 (TSLTYSLLLVLEKCIQNLFIV). Residues 439 to 518 (ESLYRRHSEE…TPGRKRQILK (80 aa)) lie on the Cytoplasmic side of the membrane. Residues 484–505 (PAAGSHALSRKQPDAPLPAGQR) are disordered. Residues 519 to 537 (NICMFLFMCNISLWILPAF) traverse the membrane as a helical segment. Over 538 to 555 (GCRPQYDNPLENETFGTS) the chain is Extracellular. A helical membrane pass occupies residues 556 to 579 (VWTTVLNVAIPLNLFYRMHSVASL). Over 580 to 586 (FEVFRKV) the chain is Cytoplasmic.

It belongs to the otopetrin family. As to quaternary structure, homodimer.

Its subcellular location is the cell membrane. The protein localises to the cell projection. The protein resides in the microvillus. The catalysed reaction is H(+)(in) = H(+)(out). With respect to regulation, activated by both acid and alkali, with proton influx in response to extracellular acid and proton efflux during alkali stimulation. Inhibited by Zn(2+); this inhibition is thought to be pH-sensitive. Currents evoked in response to mild acid (pH 6.0) stimulus may also be mildly potentiated by exposure to Zn(2+). Activated by NH(4)Cl. Functionally, proton-selective ion channel. Biphasically modulated by acid and alkali, mediating proton influx and efflux in response to extracellular acid and base stimulation, respectively. May be involved in acid and base perception. Sensor for ammonium chloride (NH(4)Cl) in taste receptor cells. NH(4)Cl acts by increasing the intracellular pH, thereby generating a driving force for proton entry through OTOP1 channel. Plays a role in the regulation of Ca(2+) flux in response to purigenic (ATP, ADP and UDP) stimuli, leading to increase in cytosolic Ca(2+) due to influx of extracellular calcium. May play this role by inhibiting P2Y purinoceptor-mediated Ca(2+) release in a Ca(2+)-dependent manner and promote an influx of Ca(2+) in response to ATP. Through this mechanism and possibly others, plays a role in the formation and function of calcium carbonate-based structures in the vestibular system of the inner ear, called otoconia, that sense gravity and linear acceleration. The sequence is that of Proton channel OTOP1 from Danio rerio (Zebrafish).